We begin with the raw amino-acid sequence, 285 residues long: Pantothenate synthetase (285 aa).

32–39 is an ATP binding site; sequence MGALHDGH. Catalysis depends on histidine 39, which acts as the Proton donor. Glutamine 63 serves as a coordination point for (R)-pantoate. A beta-alanine-binding site is contributed by glutamine 63. 149–152 serves as a coordination point for ATP; the sequence is GEKD. Glutamine 155 serves as a coordination point for (R)-pantoate. ATP is bound by residues valine 178 and 186 to 189; that span reads MSSR.

The protein belongs to the pantothenate synthetase family. In terms of assembly, homodimer.

It is found in the cytoplasm. The enzyme catalyses (R)-pantoate + beta-alanine + ATP = (R)-pantothenate + AMP + diphosphate + H(+). It participates in cofactor biosynthesis; (R)-pantothenate biosynthesis; (R)-pantothenate from (R)-pantoate and beta-alanine: step 1/1. Functionally, catalyzes the condensation of pantoate with beta-alanine in an ATP-dependent reaction via a pantoyl-adenylate intermediate. This Ruegeria pomeroyi (strain ATCC 700808 / DSM 15171 / DSS-3) (Silicibacter pomeroyi) protein is Pantothenate synthetase.